The following is a 360-amino-acid chain: Cyclin-Y-like protein 2 (360 aa).

The Cyclin N-terminal domain maps to 204–286 (RLTAEFAIVS…FLKLINYNIG (83 aa)).

The protein belongs to the cyclin family. Cyclin Y subfamily.

The protein is Cyclin-Y-like protein 2 (CCNYL2) of Macaca fascicularis (Crab-eating macaque).